The sequence spans 1168 residues: Transcription-repair-coupling factor (1168 aa).

Residues 633 to 794 (DMQKSRPMDR…MLGVRDLSVI (162 aa)) enclose the Helicase ATP-binding domain. 646–653 (GDVGYGKT) serves as a coordination point for ATP. The DEEQ box motif lies at 747-750 (DEEQ). The region spanning 808 to 969 (VLEQNMSFIK…GFKIAMRDLN (162 aa)) is the Helicase C-terminal domain.

This sequence in the N-terminal section; belongs to the UvrB family. In the C-terminal section; belongs to the helicase family. RecG subfamily.

Its subcellular location is the cytoplasm. Its function is as follows. Couples transcription and DNA repair by recognizing RNA polymerase (RNAP) stalled at DNA lesions. Mediates ATP-dependent release of RNAP and its truncated transcript from the DNA, and recruitment of nucleotide excision repair machinery to the damaged site. The polypeptide is Transcription-repair-coupling factor (Staphylococcus aureus (strain USA300)).